Consider the following 109-residue polypeptide: N-alpha-acetyltransferase 38, NatC auxiliary subunit (109 aa).

The region spanning 23–101 (LARCKLENLL…VVSIEVETES (79 aa)) is the Sm domain.

Belongs to the snRNP Sm proteins family. As to quaternary structure, component of the N-terminal acetyltransferase C (NatC) complex.

It localises to the cytoplasm. It is found in the nucleus. Its function is as follows. Auxillary component of the N-terminal acetyltransferase C (NatC) complex which catalyzes acetylation of N-terminal methionine residues. N-terminal acetylation protects proteins from ubiquitination and degradation by the N-end rule pathway. This chain is N-alpha-acetyltransferase 38, NatC auxiliary subunit (naa38), found in Danio rerio (Zebrafish).